Reading from the N-terminus, the 1301-residue chain is DNA-directed RNA polymerase subunit beta (1301 aa).

This sequence belongs to the RNA polymerase beta chain family. As to quaternary structure, the RNAP catalytic core consists of 2 alpha, 1 beta, 1 beta' and 1 omega subunit. When a sigma factor is associated with the core the holoenzyme is formed, which can initiate transcription.

It catalyses the reaction RNA(n) + a ribonucleoside 5'-triphosphate = RNA(n+1) + diphosphate. In terms of biological role, DNA-dependent RNA polymerase catalyzes the transcription of DNA into RNA using the four ribonucleoside triphosphates as substrates. This is DNA-directed RNA polymerase subunit beta from Chlorobium luteolum (strain DSM 273 / BCRC 81028 / 2530) (Pelodictyon luteolum).